A 360-amino-acid chain; its full sequence is DNA replication and repair protein RecF (360 aa).

30–37 lines the ATP pocket; it reads GHNGSGKT.

Belongs to the RecF family.

The protein localises to the cytoplasm. Functionally, the RecF protein is involved in DNA metabolism; it is required for DNA replication and normal SOS inducibility. RecF binds preferentially to single-stranded, linear DNA. It also seems to bind ATP. This Shewanella amazonensis (strain ATCC BAA-1098 / SB2B) protein is DNA replication and repair protein RecF.